Here is a 965-residue protein sequence, read N- to C-terminus: FKBP12-associated protein 1 (965 aa).

Residues 68–118 form an RING-type; degenerate zinc finger; the sequence is CMICTVEMDYTCQMFACKRCYRVFDYGCIREWALKSTEKTVDRIWKCPNCY. NF-X1-type zinc fingers lie at residues 159-177, 216-235, 362-382, 468-487, and 586-606; these read CMHG…ECTR, CSIH…PCPE, CGKH…PCLQ, CGIH…PCLE, and CYHT…VCKQ. The region spanning 733–796 is the R3H domain; it reads ERWCSQIEAI…MRSVFIKKED (64 aa). The residue at position 951 (Thr951) is a Phosphothreonine. Ser958 is modified (phosphoserine).

The protein belongs to the NFX1 family. In terms of assembly, interacts with FPR1.

The protein localises to the cytoplasm. Its subcellular location is the nucleus. Its function is as follows. May play a role in transcription regulation. The sequence is that of FKBP12-associated protein 1 (FAP1) from Saccharomyces cerevisiae (strain ATCC 204508 / S288c) (Baker's yeast).